Consider the following 124-residue polypeptide: Small ribosomal subunit protein uS13 (124 aa).

Residues 99 to 124 (RGQRTRTNARTRKGPRKTVGVMRKKS) form a disordered region. Positions 101 to 124 (QRTRTNARTRKGPRKTVGVMRKKS) are enriched in basic residues.

The protein belongs to the universal ribosomal protein uS13 family. Part of the 30S ribosomal subunit. Forms a loose heterodimer with protein S19. Forms two bridges to the 50S subunit in the 70S ribosome.

In terms of biological role, located at the top of the head of the 30S subunit, it contacts several helices of the 16S rRNA. In the 70S ribosome it contacts the 23S rRNA (bridge B1a) and protein L5 of the 50S subunit (bridge B1b), connecting the 2 subunits; these bridges are implicated in subunit movement. Contacts the tRNAs in the A and P-sites. In Caldicellulosiruptor bescii (strain ATCC BAA-1888 / DSM 6725 / KCTC 15123 / Z-1320) (Anaerocellum thermophilum), this protein is Small ribosomal subunit protein uS13.